The sequence spans 103 residues: Cysteine-rich and transmembrane domain-containing protein 1 (103 aa).

Positions 1–45 are enriched in pro residues; it reads MNQGNPPPYPGPGPTAPYPPYPSQPMGPGFYPPGPPGGPYPPPQG. Residues 1–66 are disordered; sequence MNQGNPPPYP…WQGGPQEPPK (66 aa). Low complexity predominate over residues 46–56; sequence GYPYQGYPQYG. The chain crosses the membrane as a helical span at residues 80-97; the sequence is LGTSTCLTACWTALCCCC.

This sequence belongs to the CYSTM1 family.

It is found in the membrane. This Bos taurus (Bovine) protein is Cysteine-rich and transmembrane domain-containing protein 1 (CYSTM1).